The chain runs to 505 residues: ATP synthase subunit alpha (505 aa).

Residue 169 to 176 (GDRQIGKT) coordinates ATP.

Belongs to the ATPase alpha/beta chains family. As to quaternary structure, F-type ATPases have 2 components, CF(1) - the catalytic core - and CF(0) - the membrane proton channel. CF(1) has five subunits: alpha(3), beta(3), gamma(1), delta(1), epsilon(1). CF(0) has three main subunits: a(1), b(2) and c(9-12). The alpha and beta chains form an alternating ring which encloses part of the gamma chain. CF(1) is attached to CF(0) by a central stalk formed by the gamma and epsilon chains, while a peripheral stalk is formed by the delta and b chains.

The protein localises to the cell inner membrane. The catalysed reaction is ATP + H2O + 4 H(+)(in) = ADP + phosphate + 5 H(+)(out). In terms of biological role, produces ATP from ADP in the presence of a proton gradient across the membrane. The alpha chain is a regulatory subunit. This chain is ATP synthase subunit alpha, found in Desulfatibacillum aliphaticivorans.